A 469-amino-acid polypeptide reads, in one-letter code: Gamma-aminobutyric acid permease (469 aa).

At 1-17 the chain is on the cytoplasmic side; that stretch reads MNQSQSGLKKELKTRHM. The helical transmembrane segment at 18 to 38 threads the bilayer; it reads TMISIAGVIGAGLFVGSGSVI. His-39 is a topological domain (extracellular). Residues 40-60 form a helical membrane-spanning segment; sequence STGPGAVVSYALAGLLVIFIM. At 61 to 94 the chain is on the cytoplasmic side; sequence RMLGEMSAVNPTSGSFSQYAHDAIGPWAGFTIGW. A helical transmembrane segment spans residues 95–115; that stretch reads LYWFFWVIVIAIEAIAGAGII. Gln-116 is a topological domain (extracellular). The chain crosses the membrane as a helical span at residues 117 to 137; it reads YWFHDIPLWLTSLILTIVLTL. The Cytoplasmic portion of the chain corresponds to 138–157; sequence TNVYSVKSFGEFEYWFSLIK. The chain crosses the membrane as a helical span at residues 158–178; the sequence is VVTIIAFLIVGFAFIFGFAPG. Residues 179–200 lie on the Extracellular side of the membrane; the sequence is SEPVGFSNLTGKGGFFPEGISS. Residues 201 to 221 form a helical membrane-spanning segment; sequence VLLGIVVVIFSFMGTEIVAIA. Residues 222–242 are Cytoplasmic-facing; it reads AGETSNPIESVTKATRSVVWR. A helical transmembrane segment spans residues 243 to 263; that stretch reads IIVFYVGSIAIVVALLPWNSA. Topologically, residues 264-269 are extracellular; the sequence is NILESP. Residues 270-290 traverse the membrane as a helical segment; the sequence is FVAVLEHIGVPAAAQIMNFIV. The Cytoplasmic segment spans residues 291–328; the sequence is LTAVLSCLNSGLYTTSRMLYSLAERNEAPRRFMKLSKK. A helical membrane pass occupies residues 329–349; sequence GVPVQAIVAGTFFSYIAVVMN. The Extracellular portion of the chain corresponds to 350-355; the sequence is YFSPDT. A helical transmembrane segment spans residues 356 to 376; sequence VFLFLVNSSGAIALLVYLVIA. Over 377–401 the chain is Cytoplasmic; sequence VSQLKMRKKLEKTNPEALKIKMWLF. The helical transmembrane segment at 402-422 threads the bilayer; that stretch reads PFLTYLTIIAICGILVSMAFI. Over 423 to 425 the chain is Extracellular; that stretch reads DSM. A helical membrane pass occupies residues 426–446; that stretch reads RDELLLTGVITGIVLISYLVF. The Cytoplasmic portion of the chain corresponds to 447 to 469; that stretch reads RKRKVSEKAAANPVTQQQPDILP.

The protein belongs to the amino acid-polyamine-organocation (APC) superfamily. Amino acid transporter (AAT) (TC 2.A.3.1) family.

Its subcellular location is the cell membrane. The enzyme catalyses 4-aminobutanoate(in) + H(+)(in) = 4-aminobutanoate(out) + H(+)(out). The catalysed reaction is beta-alanine(in) + H(+)(in) = beta-alanine(out) + H(+)(out). It participates in amino-acid degradation; 4-aminobutanoate degradation. Functionally, transporter for gamma-aminobutyrate (GABA). Can also transport beta-alanine. Can translocate several open-chain GABA analogs (3-aminobutyrate, 3-aminopropanoate, cis-4-aminobutenoate) across the membrane via counterflow against GABA, but cannot transport muscimol. Also functions as a low-affinity proline importer. This chain is Gamma-aminobutyric acid permease, found in Bacillus subtilis (strain 168).